Here is a 199-residue protein sequence, read N- to C-terminus: Guanylate kinase (199 aa).

The 179-residue stretch at 20 to 198 folds into the Guanylate kinase-like domain; sequence GKLIILTGPS…ALQAIEVALF (179 aa). 27-34 is a binding site for ATP; that stretch reads GPSGVGKG.

This sequence belongs to the guanylate kinase family.

It is found in the cytoplasm. The enzyme catalyses GMP + ATP = GDP + ADP. Functionally, essential for recycling GMP and indirectly, cGMP. The polypeptide is Guanylate kinase (Nostoc sp. (strain PCC 7120 / SAG 25.82 / UTEX 2576)).